The primary structure comprises 165 residues: Transmembrane protein 128 (165 aa).

4 helical membrane passes run 49–69 (NIHS…VDFF), 81–101 (WFLC…YCIV), 119–139 (LIPI…IALW), and 144–164 (FFTP…ITLL).

The protein localises to the membrane. The polypeptide is Transmembrane protein 128 (TMEM128) (Homo sapiens (Human)).